A 486-amino-acid chain; its full sequence is Methionine aminopeptidase 2-2 (486 aa).

The span at 1-10 shows a compositional bias: basic and acidic residues; the sequence is MGSKSPEGHR. A disordered region spans residues 1–120; the sequence is MGSKSPEGHR…ALPATELKQT (120 aa). The span at 46–56 shows a compositional bias: acidic residues; sequence GDDDDDEDAEE. A compositionally biased stretch (basic residues) spans 93-108; the sequence is KKKKRKKSNKKKKKTK. His-238 contributes to the substrate binding site. A divalent metal cation is bound by residues Asp-259, Asp-270, and His-339. His-347 is a substrate binding site. 2 residues coordinate a divalent metal cation: Glu-372 and Glu-467.

This sequence belongs to the peptidase M24A family. Methionine aminopeptidase eukaryotic type 2 subfamily. Requires Co(2+) as cofactor. Zn(2+) serves as cofactor. It depends on Mn(2+) as a cofactor. The cofactor is Fe(2+).

The protein localises to the cytoplasm. It carries out the reaction Release of N-terminal amino acids, preferentially methionine, from peptides and arylamides.. Its function is as follows. Cotranslationally removes the N-terminal methionine from nascent proteins. The N-terminal methionine is often cleaved when the second residue in the primary sequence is small and uncharged (Met-Ala-, Cys, Gly, Pro, Ser, Thr, or Val). The polypeptide is Methionine aminopeptidase 2-2 (Aspergillus fumigatus (strain ATCC MYA-4609 / CBS 101355 / FGSC A1100 / Af293) (Neosartorya fumigata)).